Reading from the N-terminus, the 66-residue chain is Large ribosomal subunit protein bL35 (66 aa).

A compositionally biased stretch (basic residues) spans 1–26 (MPKMKTHRGAAKRVKRTASGKLKRSR). Residues 1–49 (MPKMKTHRGAAKRVKRTASGKLKRSRAFTSHLFANKSTKQKRKLRKASL) are disordered.

The protein belongs to the bacterial ribosomal protein bL35 family.

In Staphylococcus carnosus (strain TM300), this protein is Large ribosomal subunit protein bL35.